We begin with the raw amino-acid sequence, 115 residues long: Tyrosine-protein phosphatase 24 (115 aa).

One can recognise a Tyrosine-protein phosphatase domain in the interval 1–115 (WMMIVEQKCR…ETGSDAPMVV (115 aa)). D83 contributes to the substrate binding site.

The protein belongs to the protein-tyrosine phosphatase family.

The catalysed reaction is O-phospho-L-tyrosyl-[protein] + H2O = L-tyrosyl-[protein] + phosphate. The sequence is that of Tyrosine-protein phosphatase 24 (STY-24) from Styela plicata (Wrinkled sea squirt).